Here is a 210-residue protein sequence, read N- to C-terminus: UPF0173 protein PYRAB01190 (210 aa).

The protein belongs to the UPF0173 family.

In Pyrococcus abyssi (strain GE5 / Orsay), this protein is UPF0173 protein PYRAB01190.